The following is a 448-amino-acid chain: DEAD-box ATP-dependent RNA helicase CshB (448 aa).

A Q motif motif is present at residues 4–32; sequence HPFEQFNLESSLIDAVKDLNFEKPTEIQN. The Helicase ATP-binding domain maps to 35–206; sequence IPRILKRTNL…NKYLSHPEYV (172 aa). An ATP-binding site is contributed by 48 to 55; it reads SQTGTGKS. A DEAD box motif is present at residues 154 to 157; the sequence is DEAD. Residues 236–386 form the Helicase C-terminal domain; sequence NLIDILNPYL…EVKAHNQRQA (151 aa). Basic residues predominate over residues 400–418; that stretch reads NKVRSKIKNKVKPGYKKKF. Residues 400–448 are disordered; sequence NKVRSKIKNKVKPGYKKKFKQEVEKMKRQERKQFSKQQNRQKRKQNKKG. Residues 419-432 are compositionally biased toward basic and acidic residues; it reads KQEVEKMKRQERKQ. A compositionally biased stretch (basic residues) spans 438–448; it reads NRQKRKQNKKG.

Belongs to the DEAD box helicase family. CshB subfamily.

It is found in the cytoplasm. It carries out the reaction ATP + H2O = ADP + phosphate + H(+). Probable DEAD-box RNA helicase. May work in conjunction with the cold shock proteins to ensure proper initiation of transcription at low and optimal temperatures. The protein is DEAD-box ATP-dependent RNA helicase CshB of Staphylococcus aureus (strain NCTC 8325 / PS 47).